The sequence spans 165 residues: Protein SprT (165 aa).

A SprT-like domain is found at glutamate 20–valine 163. A Zn(2+)-binding site is contributed by histidine 78. The active site involves glutamate 79. Histidine 82 provides a ligand contact to Zn(2+).

It belongs to the SprT family. Zn(2+) serves as cofactor.

It localises to the cytoplasm. This chain is Protein SprT, found in Shigella flexneri serotype 5b (strain 8401).